Reading from the N-terminus, the 496-residue chain is Cyclin-L1 (496 aa).

2 cyclin-like regions span residues 68-170 and 183-267; these read ELIQ…RILK and KIIV…TTLR. Residues 301 to 496 are disordered; that stretch reads NPDGTPAILS…SHSGHGRHRR (196 aa). Over residues 322 to 347 the composition is skewed to basic and acidic residues; sequence SPRDVKTEEKSPNFAKVKREMDDKQS. Basic residues-rich tracts occupy residues 358–392, 412–426, 434–446, and 456–468; these read ENKR…RRSR, RRHH…KLKH, RHAH…HSPS, and KKHR…HRER. Residues 363–406 are RS; it reads RSVSRSRSRTKSRSRSHSPRRHYNNRRRSRSGTYSSRSRSRSRS. Residues 469–478 show a composition bias toward basic and acidic residues; the sequence is RERSRSFERS. Basic residues predominate over residues 479–496; the sequence is HKNKHHGSSHSGHGRHRR.

This sequence belongs to the cyclin family. Cyclin L subfamily.

It localises to the nucleus speckle. The protein resides in the nucleus. Its subcellular location is the nucleoplasm. Functionally, involved in pre-mRNA splicing. This Xenopus laevis (African clawed frog) protein is Cyclin-L1 (ccnl1).